The primary structure comprises 146 residues: 3-dehydroquinate dehydratase (146 aa).

Residue Tyr24 is the Proton acceptor of the active site. The substrate site is built by Asn73, His79, and Asp86. Residue His99 is the Proton donor of the active site. Substrate-binding positions include Leu100–Ser101 and Arg110.

Belongs to the type-II 3-dehydroquinase family. Homododecamer.

The catalysed reaction is 3-dehydroquinate = 3-dehydroshikimate + H2O. The protein operates within metabolic intermediate biosynthesis; chorismate biosynthesis; chorismate from D-erythrose 4-phosphate and phosphoenolpyruvate: step 3/7. Its function is as follows. Catalyzes a trans-dehydration via an enolate intermediate. The polypeptide is 3-dehydroquinate dehydratase (Shewanella baltica (strain OS195)).